The sequence spans 23 residues: Phallacidin proprotein (23 aa).

Pro-1 is a propeptide. Residues 2–8 (AWLVDCP) constitute a cross-link (cyclopeptide (Ala-Pro)). A cross-link (2'-cysteinyl-6'-hydroxytryptophan sulfoxide (Trp-Cys)) is located at residues 3 to 7 (WLVDC). A propeptide spanning residues 9–23 (CVGDDVNRLLARGEK) is cleaved from the precursor.

The protein belongs to the MSDIN fungal toxin family. In terms of processing, processed by the macrocyclase-peptidase enzyme POPB to yield a toxic cyclic heptapeptide. POPB first removes 10 residues from the N-terminus. Conformational trapping of the remaining peptide forces the enzyme to release this intermediate rather than proceed to macrocyclization. The enzyme rebinds the remaining peptide in a different conformation and catalyzes macrocyclization of the N-terminal 7 residues.

Its function is as follows. Major toxin that belongs to the bicyclic heptapeptides called phallotoxins. Although structurally related to amatoxins, phallotoxins have a different mode of action, which is the stabilization of F-actin. Phallotoxins are poisonous when administered parenterally, but not orally because of poor absorption. This Amanita fuliginea (East Asian brown death cap) protein is Phallacidin proprotein.